Here is a 407-residue protein sequence, read N- to C-terminus: UDP-N-acetyl-D-mannosamine dehydrogenase (407 aa).

The protein belongs to the UDP-glucose/GDP-mannose dehydrogenase family.

It carries out the reaction UDP-N-acetyl-alpha-D-mannosamine + 2 NAD(+) + H2O = UDP-N-acetyl-alpha-D-mannosaminouronate + 2 NADH + 3 H(+). It participates in capsule biogenesis; capsule polysaccharide biosynthesis. Its function is as follows. Dehydrogenase involved in the biosynthesis of capsular polysaccharides. Catalyzes the NAD(+)-dependent oxidation of UDP-N-acetyl-D-mannosamine (UDP-ManNAc) to UDP-N-acetyl-D-mannosaminuronic acid (UDP-ManNAcA). The polypeptide is UDP-N-acetyl-D-mannosamine dehydrogenase (Campylobacter jejuni).